Here is a 257-residue protein sequence, read N- to C-terminus: 3-oxo-5-alpha-steroid 4-dehydrogenase 1 (257 aa).

The next 6 helical transmembrane spans lie at 7 to 27 (FLLD…YVLL), 50 to 70 (AAWT…CAGA), 84 to 104 (ILLA…PFLI), 109 to 129 (PMPL…GYLQ), 149 to 169 (FLTG…SDHV), and 208 to 228 (ALAS…CVLF).

Belongs to the steroid 5-alpha reductase family.

It localises to the microsome membrane. Its subcellular location is the endoplasmic reticulum membrane. It catalyses the reaction a 3-oxo-5alpha-steroid + NADP(+) = a 3-oxo-Delta(4)-steroid + NADPH + H(+). The enzyme catalyses 5alpha-pregnane-3,20-dione + NADP(+) = progesterone + NADPH + H(+). It carries out the reaction 17beta-hydroxy-5alpha-androstan-3-one + NADP(+) = testosterone + NADPH + H(+). The catalysed reaction is androst-4-ene-3,17-dione + NADPH + H(+) = 5alpha-androstan-3,17-dione + NADP(+). Functionally, converts testosterone into 5-alpha-dihydrotestosterone and progesterone or corticosterone into their corresponding 5-alpha-3-oxosteroids. It plays a central role in sexual differentiation and androgen physiology. The chain is 3-oxo-5-alpha-steroid 4-dehydrogenase 1 (SRD5A1) from Bos taurus (Bovine).